A 148-amino-acid polypeptide reads, in one-letter code: UPF0178 protein Mlg_1612 (148 aa).

Belongs to the UPF0178 family.

This chain is UPF0178 protein Mlg_1612, found in Alkalilimnicola ehrlichii (strain ATCC BAA-1101 / DSM 17681 / MLHE-1).